Here is a 365-residue protein sequence, read N- to C-terminus: Parathion hydrolase (365 aa).

The segment at residues 1 to 29 (MQTRRVVLKSAAAAGTLLGGLAGCASVAG) is a signal peptide (tat-type signal). Zn(2+) contacts are provided by His55, His57, Lys169, His201, His230, and Asp301. An N6-carboxylysine modification is found at Lys169.

Belongs to the metallo-dependent hydrolases superfamily. Phosphotriesterase family. Homodimer. Requires Zn(2+) as cofactor. In terms of processing, predicted to be exported by the Tat system. The position of the signal peptide cleavage has been experimentally proven.

It localises to the cell membrane. The enzyme catalyses An aryl dialkyl phosphate + H2O = dialkyl phosphate + an aryl alcohol.. Functionally, has an unusual substrate specificity for synthetic organophosphate triesters and phosphorofluoridates. All of the phosphate triesters found to be substrates are synthetic compounds. The identity of any naturally occurring substrate for the enzyme is unknown. Has no detectable activity with phosphate monoesters or diesters and no activity as an esterase or protease. It catalyzes the hydrolysis of the insecticide paraoxon at a rate approaching the diffusion limit and thus appears to be optimally evolved for utilizing this synthetic substrate. In Brevundimonas diminuta (Pseudomonas diminuta), this protein is Parathion hydrolase (opd).